The chain runs to 250 residues: DNA repair protein RecO (250 aa).

Belongs to the RecO family.

Involved in DNA repair and RecF pathway recombination. This chain is DNA repair protein RecO, found in Staphylococcus aureus (strain MW2).